Reading from the N-terminus, the 344-residue chain is Dihydroorotate dehydrogenase (quinone) (344 aa).

FMN is bound by residues 61–65 (AGLDK) and threonine 85. Substrate is bound at residue lysine 65. A substrate-binding site is contributed by 110 to 114 (NRMGF). FMN-binding residues include asparagine 138 and asparagine 171. Residue asparagine 171 coordinates substrate. Serine 174 functions as the Nucleophile in the catalytic mechanism. Asparagine 176 is a substrate binding site. 2 residues coordinate FMN: lysine 216 and threonine 244. Position 245–246 (245–246 (NT)) interacts with substrate. Residues glycine 267, glycine 296, and 317-318 (YS) contribute to the FMN site.

It belongs to the dihydroorotate dehydrogenase family. Type 2 subfamily. In terms of assembly, monomer. The cofactor is FMN.

Its subcellular location is the cell membrane. It carries out the reaction (S)-dihydroorotate + a quinone = orotate + a quinol. It participates in pyrimidine metabolism; UMP biosynthesis via de novo pathway; orotate from (S)-dihydroorotate (quinone route): step 1/1. Catalyzes the conversion of dihydroorotate to orotate with quinone as electron acceptor. The chain is Dihydroorotate dehydrogenase (quinone) from Psychrobacter cryohalolentis (strain ATCC BAA-1226 / DSM 17306 / VKM B-2378 / K5).